Reading from the N-terminus, the 298-residue chain is ATP synthase gamma chain (298 aa).

Belongs to the ATPase gamma chain family. In terms of assembly, F-type ATPases have 2 components, CF(1) - the catalytic core - and CF(0) - the membrane proton channel. CF(1) has five subunits: alpha(3), beta(3), gamma(1), delta(1), epsilon(1). CF(0) has three main subunits: a, b and c.

It localises to the cell inner membrane. Produces ATP from ADP in the presence of a proton gradient across the membrane. The gamma chain is believed to be important in regulating ATPase activity and the flow of protons through the CF(0) complex. The polypeptide is ATP synthase gamma chain (Francisella tularensis subsp. holarctica (strain LVS)).